Consider the following 420-residue polypeptide: RING finger protein 39 (420 aa).

Residues 88-135 (CPLCGGSFEDPVLLACEHSFCRACLARRWGTPPATGTEASPTACPCCG) form an RING-type zinc finger. A B30.2/SPRY domain is found at 210-420 (DDLPEDYPVV…APLRIVPAES (211 aa)). The interval 246–265 (DRRSVQLAPPGTPAPPDGPK) is disordered.

The protein resides in the cytoplasm. It carries out the reaction S-ubiquitinyl-[E2 ubiquitin-conjugating enzyme]-L-cysteine + [acceptor protein]-L-lysine = [E2 ubiquitin-conjugating enzyme]-L-cysteine + N(6)-ubiquitinyl-[acceptor protein]-L-lysine.. The protein operates within protein modification; protein ubiquitination. Its function is as follows. Plays an inhibitory role in anti-RNA viral innate immunity by targeting the adapter DDX3X and promoting its 'Lys-48'-linked polyubiquitination. Alternatively, enhances the cGAS-STING pathway activation by promoting 'Lys-63'-linked ubiquitination of STING1, facilitating the STING1-TBK1 complex formation and STING1 activation. The sequence is that of RING finger protein 39 (RNF39) from Pan troglodytes (Chimpanzee).